The following is a 776-amino-acid chain: Photosystem I P700 chlorophyll a apoprotein A1 (776 aa).

The next 8 membrane-spanning stretches (helical) occupy residues isoleucine 76–alanine 99, leucine 162–histidine 185, leucine 201–asparagine 225, valine 309–tyrosine 327, tryptophan 368–tyrosine 391, leucine 407–isoleucine 433, alanine 455–histidine 477, and leucine 557–leucine 575. Residues cysteine 599 and cysteine 608 each contribute to the [4Fe-4S] cluster site. A run of 2 helical transmembrane segments spans residues histidine 615–tryptophan 636 and leucine 690–phenylalanine 712. Position 701 (histidine 701) interacts with divinylchlorophyll a'. Positions 709 and 717 each coordinate divinyl chlorophyll a. Tryptophan 718 is a binding site for phylloquinone. The helical transmembrane segment at alanine 750–alanine 770 threads the bilayer.

This sequence belongs to the PsaA/PsaB family. In terms of assembly, the PsaA/B heterodimer binds the P700 chlorophyll special pair and subsequent electron acceptors. PSI consists of a core antenna complex that captures photons, and an electron transfer chain that converts photonic excitation into a charge separation. The cyanobacterial PSI reaction center is composed of one copy each of PsaA,B,C,D,E,F,I,J,K,L,M and X, and forms trimeric complexes. It depends on PSI electron transfer chain: 5 divinyl chlorophyll a, 1 divinyl chlorophyll a', 2 phylloquinones and 3 4Fe-4S clusters. PSI core antenna: 90 divinyl chlorophyll a, 22 carotenoids, 3 phospholipids and 1 galactolipid. P700 is a divinyl chlorophyll a/divinyl chlorophyll a' dimer, A0 is one or more chlorophyll divinyl a, A1 is one or both phylloquinones and FX is a shared 4Fe-4S iron-sulfur center. as a cofactor.

The protein localises to the cellular thylakoid membrane. It catalyses the reaction reduced [plastocyanin] + hnu + oxidized [2Fe-2S]-[ferredoxin] = oxidized [plastocyanin] + reduced [2Fe-2S]-[ferredoxin]. Functionally, psaA and PsaB bind P700, the primary electron donor of photosystem I (PSI), as well as the electron acceptors A0, A1 and FX. PSI is a plastocyanin/cytochrome c6-ferredoxin oxidoreductase, converting photonic excitation into a charge separation, which transfers an electron from the donor P700 chlorophyll pair to the spectroscopically characterized acceptors A0, A1, FX, FA and FB in turn. Oxidized P700 is reduced on the lumenal side of the thylakoid membrane by plastocyanin or cytochrome c6. The polypeptide is Photosystem I P700 chlorophyll a apoprotein A1 (Prochlorococcus marinus (strain MIT 9313)).